The primary structure comprises 292 residues: Acidic endochitinase (292 aa).

The signal sequence occupies residues 1–25; the sequence is MAAHKITTTLSIFFLLSSIFRSSDA. The GH18 domain maps to 26-292; it reads AGIAIYWGQN…YSDSIKGSIG (267 aa). 2 cysteine pairs are disulfide-bonded: C45/C92 and C75/C82. E152 serves as the catalytic Proton donor. C180 and C209 are oxidised to a cystine.

The protein belongs to the glycosyl hydrolase 18 family. Chitinase class II subfamily.

The protein localises to the secreted. It localises to the extracellular space. The enzyme catalyses Random endo-hydrolysis of N-acetyl-beta-D-glucosaminide (1-&gt;4)-beta-linkages in chitin and chitodextrins.. This protein functions as a defense against chitin containing fungal pathogens. The protein is Acidic endochitinase of Cucumis sativus (Cucumber).